The sequence spans 517 residues: L-amino-acid oxidase (517 aa).

Residues 1-18 (MNVFFMFSLLFLAALGSC) form the signal peptide. A disulfide bridge connects residues Cys-29 and Cys-192. Residues 62–63 (MA), 82–83 (EA), Arg-90, and 106–109 (GPMR) each bind FAD. Arg-109 lines the substrate pocket. An N-linked (GlcNAc...) asparagine glycan is attached at Asn-191. An FAD-binding site is contributed by Val-280. Cysteines 350 and 431 form a disulfide. Tyr-391 contributes to the substrate binding site. FAD-binding positions include Glu-476 and 483 to 488 (GWLDST). 483 to 484 (GW) is a binding site for substrate.

This sequence belongs to the flavin monoamine oxidase family. FIG1 subfamily. As to quaternary structure, homodimer; non-covalently linked. FAD serves as cofactor. Post-translationally, N-glycosylated. In terms of tissue distribution, expressed by the venom gland.

The protein resides in the secreted. The catalysed reaction is an L-alpha-amino acid + O2 + H2O = a 2-oxocarboxylate + H2O2 + NH4(+). Functionally, catalyzes an oxidative deamination of predominantly hydrophobic and aromatic L-amino acids, thus producing hydrogen peroxide that may contribute to the diverse toxic effects of this enzyme. Exhibits diverse biological activities, such as hemorrhage, hemolysis, edema, apoptosis of vascular endothelial cells or tumor cell lines, antiparasitic activities, as well as regulation of platelet aggregation. Effects of snake L-amino oxidases on platelets are controversial, since they either induce aggregation or inhibit agonist-induced aggregation. These different effects are probably due to different experimental conditions. This protein has antibacterial activities. In Pseudechis australis (Mulga snake), this protein is L-amino-acid oxidase.